Consider the following 64-residue polypeptide: MTKGTPSQGKHNKGSNHIVCRRCGRRAFHVRKKVCAACGFGRSSKIKRFAWQWKKVTGKGNRVK.

Zn(2+) contacts are provided by C20, C23, C35, and C38. A C4-type zinc finger spans residues 20-38 (CRRCGRRAFHVRKKVCAAC).

Belongs to the eukaryotic ribosomal protein eL37 family. It depends on Zn(2+) as a cofactor.

Binds to the 23S rRNA. This is Large ribosomal subunit protein eL37 from Methanococcus maripaludis (strain DSM 14266 / JCM 13030 / NBRC 101832 / S2 / LL).